A 212-amino-acid chain; its full sequence is Ribosomal RNA small subunit methyltransferase G (212 aa).

S-adenosyl-L-methionine-binding positions include G73, F78, 96 to 98, 124 to 125, and R141; these read ESS and VE.

Belongs to the methyltransferase superfamily. RNA methyltransferase RsmG family.

It localises to the cytoplasm. Functionally, specifically methylates the N7 position of a guanine in 16S rRNA. In Aster yellows witches'-broom phytoplasma (strain AYWB), this protein is Ribosomal RNA small subunit methyltransferase G.